A 451-amino-acid polypeptide reads, in one-letter code: tRNA modification GTPase MnmE (451 aa).

Residues R25, E87, and R127 each coordinate (6S)-5-formyl-5,6,7,8-tetrahydrofolate. One can recognise a TrmE-type G domain in the interval 222-374 (GLRVALVGRP…FVQVLLERCG (153 aa)). N232 is a K(+) binding site. Residues 232–237 (NVGKSS), 251–257 (TELPGTT), and 276–279 (DTAG) contribute to the GTP site. S236 is a Mg(2+) binding site. T251, L253, and T256 together coordinate K(+). T257 is a Mg(2+) binding site. K451 is a (6S)-5-formyl-5,6,7,8-tetrahydrofolate binding site.

The protein belongs to the TRAFAC class TrmE-Era-EngA-EngB-Septin-like GTPase superfamily. TrmE GTPase family. In terms of assembly, homodimer. Heterotetramer of two MnmE and two MnmG subunits. K(+) serves as cofactor.

The protein resides in the cytoplasm. Exhibits a very high intrinsic GTPase hydrolysis rate. Involved in the addition of a carboxymethylaminomethyl (cmnm) group at the wobble position (U34) of certain tRNAs, forming tRNA-cmnm(5)s(2)U34. This Synechococcus sp. (strain CC9902) protein is tRNA modification GTPase MnmE.